Consider the following 408-residue polypeptide: Imidazolonepropionase (408 aa).

2 residues coordinate Fe(3+): His73 and His75. Residues His73 and His75 each coordinate Zn(2+). 4-imidazolone-5-propanoate is bound by residues Arg82, Tyr145, and His178. Tyr145 contacts N-formimidoyl-L-glutamate. His243 contributes to the Fe(3+) binding site. His243 serves as a coordination point for Zn(2+). Gln246 provides a ligand contact to 4-imidazolone-5-propanoate. Asp318 lines the Fe(3+) pocket. Position 318 (Asp318) interacts with Zn(2+). Asn320 and Gly322 together coordinate N-formimidoyl-L-glutamate. Position 323 (Ser323) interacts with 4-imidazolone-5-propanoate.

It belongs to the metallo-dependent hydrolases superfamily. HutI family. The cofactor is Zn(2+). It depends on Fe(3+) as a cofactor.

It is found in the cytoplasm. The catalysed reaction is 4-imidazolone-5-propanoate + H2O = N-formimidoyl-L-glutamate. It participates in amino-acid degradation; L-histidine degradation into L-glutamate; N-formimidoyl-L-glutamate from L-histidine: step 3/3. Functionally, catalyzes the hydrolytic cleavage of the carbon-nitrogen bond in imidazolone-5-propanoate to yield N-formimidoyl-L-glutamate. It is the third step in the universal histidine degradation pathway. This chain is Imidazolonepropionase, found in Shewanella baltica (strain OS195).